The sequence spans 465 residues: UDP-N-acetylmuramate--L-alanine ligase (465 aa).

114-120 (GAHGKTT) contacts ATP.

This sequence belongs to the MurCDEF family.

Its subcellular location is the cytoplasm. The catalysed reaction is UDP-N-acetyl-alpha-D-muramate + L-alanine + ATP = UDP-N-acetyl-alpha-D-muramoyl-L-alanine + ADP + phosphate + H(+). It participates in cell wall biogenesis; peptidoglycan biosynthesis. Its function is as follows. Cell wall formation. This is UDP-N-acetylmuramate--L-alanine ligase from Syntrophomonas wolfei subsp. wolfei (strain DSM 2245B / Goettingen).